The sequence spans 416 residues: Serine hydroxymethyltransferase (416 aa).

Residues Leu121 and 125–127 (GHL) each bind (6S)-5,6,7,8-tetrahydrofolate. Lys229 carries the N6-(pyridoxal phosphate)lysine modification. (6S)-5,6,7,8-tetrahydrofolate is bound by residues Glu245 and 354–356 (SPF).

This sequence belongs to the SHMT family. Homodimer. Pyridoxal 5'-phosphate is required as a cofactor.

It is found in the cytoplasm. The catalysed reaction is (6R)-5,10-methylene-5,6,7,8-tetrahydrofolate + glycine + H2O = (6S)-5,6,7,8-tetrahydrofolate + L-serine. It functions in the pathway one-carbon metabolism; tetrahydrofolate interconversion. The protein operates within amino-acid biosynthesis; glycine biosynthesis; glycine from L-serine: step 1/1. In terms of biological role, catalyzes the reversible interconversion of serine and glycine with tetrahydrofolate (THF) serving as the one-carbon carrier. This reaction serves as the major source of one-carbon groups required for the biosynthesis of purines, thymidylate, methionine, and other important biomolecules. Also exhibits THF-independent aldolase activity toward beta-hydroxyamino acids, producing glycine and aldehydes, via a retro-aldol mechanism. This Aliivibrio fischeri (strain ATCC 700601 / ES114) (Vibrio fischeri) protein is Serine hydroxymethyltransferase.